A 376-amino-acid chain; its full sequence is Glucose-1-phosphate adenylyltransferase (376 aa).

Alpha-D-glucose 1-phosphate contacts are provided by residues Tyr-101, Gly-166, 181-182 (EK), and Ser-192.

It belongs to the bacterial/plant glucose-1-phosphate adenylyltransferase family. As to quaternary structure, homotetramer.

The enzyme catalyses alpha-D-glucose 1-phosphate + ATP + H(+) = ADP-alpha-D-glucose + diphosphate. The protein operates within glycan biosynthesis; glycogen biosynthesis. Its function is as follows. Involved in the biosynthesis of ADP-glucose, a building block required for the elongation reactions to produce glycogen. Catalyzes the reaction between ATP and alpha-D-glucose 1-phosphate (G1P) to produce pyrophosphate and ADP-Glc. The sequence is that of Glucose-1-phosphate adenylyltransferase from Bacillus cereus (strain ATCC 14579 / DSM 31 / CCUG 7414 / JCM 2152 / NBRC 15305 / NCIMB 9373 / NCTC 2599 / NRRL B-3711).